The chain runs to 155 residues: Small ribosomal subunit protein uS7c (155 aa).

This sequence belongs to the universal ribosomal protein uS7 family. In terms of assembly, part of the 30S ribosomal subunit.

Its subcellular location is the plastid. The protein resides in the chloroplast. Its function is as follows. One of the primary rRNA binding proteins, it binds directly to 16S rRNA where it nucleates assembly of the head domain of the 30S subunit. The polypeptide is Small ribosomal subunit protein uS7c (rps7) (Cabomba caroliniana (Carolina fanwort)).